We begin with the raw amino-acid sequence, 462 residues long: Argininosuccinate lyase 2 (462 aa).

Belongs to the lyase 1 family. Argininosuccinate lyase subfamily.

The protein resides in the cytoplasm. The enzyme catalyses 2-(N(omega)-L-arginino)succinate = fumarate + L-arginine. Its pathway is amino-acid biosynthesis; L-arginine biosynthesis; L-arginine from L-ornithine and carbamoyl phosphate: step 3/3. This is Argininosuccinate lyase 2 from Shouchella clausii (strain KSM-K16) (Alkalihalobacillus clausii).